Reading from the N-terminus, the 217-residue chain is Adr-2-binding protein 1 (217 aa).

Residues 33 to 65 (ARPEPQHDSLKRRNTTSSIAKKKAKMTRGDEQI) form a disordered region. Positions 44 to 58 (RRNTTSSIAKKKAKM) are enriched in basic residues.

As to quaternary structure, interacts with double-stranded RNA-specific adenosine deaminase adr-2. As to expression, expressed in main body hypodermal cells, the hypodermal seam cells, pharynx, intestine and some neurons.

It is found in the nucleus. In terms of biological role, required for the A-I editing activity of the double-stranded RNA-specific adenosine deaminase adr-2 by facilitating adr-2 nuclear localization. In Caenorhabditis elegans, this protein is Adr-2-binding protein 1.